Here is a 932-residue protein sequence, read N- to C-terminus: Protocadherin gamma-A6 (932 aa).

A signal peptide spans 1 to 29 (MAPPQRHPQRSEQVLLLTLLGTLWGAAAA). 6 consecutive Cadherin domains span residues 30-133 (QIRY…TPRF), 134-242 (LKEE…TPVF), 243-347 (TQPV…VPEV), 348-452 (VVTS…PPTF), 453-562 (PHSS…APEI), and 570-682 (DGST…EPSA). Topologically, residues 30–692 (QIRYSIPEEL…KPNDSDLTLY (663 aa)) are extracellular. A glycan (N-linked (GlcNAc...) asparagine) is linked at N81. 2 N-linked (GlcNAc...) asparagine glycosylation sites follow: N419 and N545. N-linked (GlcNAc...) asparagine glycosylation occurs at N685. A helical transmembrane segment spans residues 693–713 (LVVAVAAVSCVFLAFVIVLLA). Over 714–932 (LRLQRWHKSR…KKKSGKKEKK (219 aa)) the chain is Cytoplasmic. 2 disordered regions span residues 803–841 (DPRQLQQAPPNTDWRFSQAQRPGTSGSQNGDDTGTWPNN) and 902–932 (ATLTNAAGKRDGKAPAGGNGNKKKSGKKEKK). The segment covering 806-841 (QLQQAPPNTDWRFSQAQRPGTSGSQNGDDTGTWPNN) has biased composition (polar residues). The span at 922–932 (NKKKSGKKEKK) shows a compositional bias: basic residues.

The protein localises to the cell membrane. In terms of biological role, potential calcium-dependent cell-adhesion protein. May be involved in the establishment and maintenance of specific neuronal connections in the brain. This Pan troglodytes (Chimpanzee) protein is Protocadherin gamma-A6 (PCDHGA6).